A 402-amino-acid polypeptide reads, in one-letter code: Tyrosine--tRNA ligase (402 aa).

The short motif at 47–56 (PTAPDLHLGH) is the 'HIGH' region element. Positions 232 to 236 (KMSKS) match the 'KMSKS' region motif. Lysine 235 serves as a coordination point for ATP. The 61-residue stretch at 341 to 401 (VGILDVLKQI…GKKRFMKLNI (61 aa)) folds into the S4 RNA-binding domain.

The protein belongs to the class-I aminoacyl-tRNA synthetase family. TyrS type 2 subfamily. In terms of assembly, homodimer.

The protein localises to the cytoplasm. The enzyme catalyses tRNA(Tyr) + L-tyrosine + ATP = L-tyrosyl-tRNA(Tyr) + AMP + diphosphate + H(+). In terms of biological role, catalyzes the attachment of tyrosine to tRNA(Tyr) in a two-step reaction: tyrosine is first activated by ATP to form Tyr-AMP and then transferred to the acceptor end of tRNA(Tyr). In Helicobacter pylori (strain ATCC 700392 / 26695) (Campylobacter pylori), this protein is Tyrosine--tRNA ligase.